The chain runs to 397 residues: t-SNARE affecting a late Golgi compartment protein 2 (397 aa).

Over Met-1–Lys-317 the chain is Cytoplasmic. Positions Asp-74–Val-96 form a coiled coil. A Phosphoserine modification is found at Ser-109. In terms of domain architecture, t-SNARE coiled-coil homology spans Glu-244–Ala-306. The helical; Anchor for type IV membrane protein transmembrane segment at Val-318 to His-338 threads the bilayer. The Vesicular segment spans residues Gly-339 to Leu-397. A disordered region spans residues Gly-341–Leu-397. A compositionally biased stretch (basic and acidic residues) spans Asn-353–Asp-374. Over residues Thr-386–Leu-397 the composition is skewed to acidic residues.

This sequence belongs to the syntaxin family. Interacts with VPS45.

Its subcellular location is the golgi apparatus. The protein resides in the trans-Golgi network membrane. It localises to the endosome membrane. In terms of biological role, t-SNARE that functions in transport from the endosome to the late Golgi and on the endocytic pathway. This chain is t-SNARE affecting a late Golgi compartment protein 2 (TLG2), found in Saccharomyces cerevisiae (strain ATCC 204508 / S288c) (Baker's yeast).